The following is a 222-amino-acid chain: uncharacterized protein (222 aa).

A coiled-coil region spans residues 43-73 (SQNEEFEYEMERMLSILNEQTMDLTQLQSRI).

This is an uncharacterized protein from Rickettsia conorii (strain ATCC VR-613 / Malish 7).